The chain runs to 421 residues: Serine hydroxymethyltransferase (421 aa).

(6S)-5,6,7,8-tetrahydrofolate contacts are provided by residues L118 and 122–124 (GHL). K226 is modified (N6-(pyridoxal phosphate)lysine).

It belongs to the SHMT family. As to quaternary structure, homodimer. The cofactor is pyridoxal 5'-phosphate.

It is found in the cytoplasm. The enzyme catalyses (6R)-5,10-methylene-5,6,7,8-tetrahydrofolate + glycine + H2O = (6S)-5,6,7,8-tetrahydrofolate + L-serine. The protein operates within one-carbon metabolism; tetrahydrofolate interconversion. It participates in amino-acid biosynthesis; glycine biosynthesis; glycine from L-serine: step 1/1. In terms of biological role, catalyzes the reversible interconversion of serine and glycine with tetrahydrofolate (THF) serving as the one-carbon carrier. This reaction serves as the major source of one-carbon groups required for the biosynthesis of purines, thymidylate, methionine, and other important biomolecules. Also exhibits THF-independent aldolase activity toward beta-hydroxyamino acids, producing glycine and aldehydes, via a retro-aldol mechanism. This Mycoplasmopsis agalactiae (strain NCTC 10123 / CIP 59.7 / PG2) (Mycoplasma agalactiae) protein is Serine hydroxymethyltransferase.